The chain runs to 623 residues: Cell pattern formation-associated protein stuA (623 aa).

A compositionally biased stretch (polar residues) spans 13–31 (QHMQSAGQPQQPQTVTSGP). A disordered region spans residues 13-111 (QHMQSAGQPQ…DTTGQHPPPG (99 aa)). In terms of domain architecture, HTH APSES-type spans 115-221 (RVTATLWEDE…HNIGALLYHP (107 aa)). A DNA-binding region (H-T-H motif) is located at residues 149-170 (GTKLLNVAGMTRGRRDGILKSE). Disordered stretches follow at residues 232 to 270 (AAAE…PQSS) and 332 to 623 (ARSM…PRQR). Polar residues predominate over residues 335-374 (MPTTPATTPPGSMQPYGSAQSFDGSRQQMYNAPSQQSPYP). Residues 396-408 (GPPSSRPSGSAPS) are compositionally biased toward low complexity. Positions 423 to 446 (EHGHQSHAGEEDGEHEQHDAEYTH) are enriched in basic and acidic residues. Residues 542-553 (APPADMANPMPN) are compositionally biased toward low complexity. The nuclear localization domain stretch occupies residues 569–594 (KRGREGDDDLSRPVGDVPGMDMKRRK). A compositionally biased stretch (basic and acidic residues) spans 570–579 (RGREGDDDLS).

The protein belongs to the EFG1/PHD1/stuA family.

The protein resides in the nucleus. Functionally, transcription factor that regulates asexual reproduction. Binds the StuA-response elements (StRE) with the consensus sequence 5'-(A/T)CGCG(T/A)N(A/C)-3' at the promoters of target genes. Controls conidiation by positively regulating the expression of brlA and abaA. Positively regulates the cephalosporin biosynthesis gene cluster. Also involved hyphal fragmentation and cell wall integrity. The chain is Cell pattern formation-associated protein stuA from Hapsidospora chrysogenum (strain ATCC 11550 / CBS 779.69 / DSM 880 / IAM 14645 / JCM 23072 / IMI 49137) (Acremonium chrysogenum).